Reading from the N-terminus, the 116-residue chain is Protein Wnt-5b (116 aa).

Residue S1 is the site of O-palmitoleoyl serine; by PORCN attachment. Residues N69 and N83 are each glycosylated (N-linked (GlcNAc...) asparagine). C82 and C97 are joined by a disulfide.

The protein belongs to the Wnt family. In terms of processing, palmitoleoylation is required for efficient binding to frizzled receptors. Depalmitoleoylation leads to Wnt signaling pathway inhibition.

Its subcellular location is the secreted. The protein localises to the extracellular space. It is found in the extracellular matrix. Functionally, ligand for members of the frizzled family of seven transmembrane receptors. Probable developmental protein. May be a signaling molecule which affects the development of discrete regions of tissues. Is likely to signal over only few cell diameters. The sequence is that of Protein Wnt-5b (WNT-5B) from Plethodon jordani (Red-cheeked salamander).